The primary structure comprises 383 residues: Succinyl-diaminopimelate desuccinylase (383 aa).

H72 contacts Zn(2+). The active site involves D74. D105 contacts Zn(2+). The active-site Proton acceptor is E137. Residues E138, E167, and H352 each contribute to the Zn(2+) site.

The protein belongs to the peptidase M20A family. DapE subfamily. As to quaternary structure, homodimer. Zn(2+) serves as cofactor. Requires Co(2+) as cofactor.

It carries out the reaction N-succinyl-(2S,6S)-2,6-diaminopimelate + H2O = (2S,6S)-2,6-diaminopimelate + succinate. It participates in amino-acid biosynthesis; L-lysine biosynthesis via DAP pathway; LL-2,6-diaminopimelate from (S)-tetrahydrodipicolinate (succinylase route): step 3/3. In terms of biological role, catalyzes the hydrolysis of N-succinyl-L,L-diaminopimelic acid (SDAP), forming succinate and LL-2,6-diaminopimelate (DAP), an intermediate involved in the bacterial biosynthesis of lysine and meso-diaminopimelic acid, an essential component of bacterial cell walls. This Ehrlichia ruminantium (strain Gardel) protein is Succinyl-diaminopimelate desuccinylase.